Reading from the N-terminus, the 599-residue chain is Calmodulin-binding protein 60 E (599 aa).

The interval 1–21 is disordered; sequence MNKRGYECSQEDTDKLPESKR. Positions 1–80 are calmodulin-binding; sequence MNKRGYECSQ…LTSRSPEPKR (80 aa). The interval 150 to 273 is DNA-binding; it reads EDDEDWTREH…VLHKKLLKAN (124 aa).

It belongs to the plant ACBP60 protein family. Interacts with calmodulin (CaM).

It localises to the nucleus. In terms of biological role, transcription activator that binds DNA in a sequence-specific manner, likely 5'-GAAATTTTGG-3', to promote the expression of target genes. This Arabidopsis thaliana (Mouse-ear cress) protein is Calmodulin-binding protein 60 E.